Consider the following 710-residue polypeptide: Polyribonucleotide nucleotidyltransferase (710 aa).

Mg(2+)-binding residues include D488 and D494. In terms of domain architecture, KH spans 555 to 614; that stretch reads PRIETITIPTDKIRDVIGSGGKVIREIVETTGAKVDVNDDGVIKVSSSDGASIKAALDWI. The region spanning 624–692 is the S1 motif domain; sequence GQIYKGKVVK…DRGKVRLSMK (69 aa).

It belongs to the polyribonucleotide nucleotidyltransferase family. Mg(2+) serves as cofactor.

The protein localises to the cytoplasm. It carries out the reaction RNA(n+1) + phosphate = RNA(n) + a ribonucleoside 5'-diphosphate. Involved in mRNA degradation. Catalyzes the phosphorolysis of single-stranded polyribonucleotides processively in the 3'- to 5'-direction. The polypeptide is Polyribonucleotide nucleotidyltransferase (Maricaulis maris (strain MCS10) (Caulobacter maris)).